Reading from the N-terminus, the 441-residue chain is tRNA modification GTPase MnmE (441 aa).

Arg-23, Glu-81, and Lys-121 together coordinate (6S)-5-formyl-5,6,7,8-tetrahydrofolate. The TrmE-type G domain maps to 218–363 (GFRVAIVGPP…LESWIAAFVS (146 aa)). Asn-228 is a binding site for K(+). Residues 228 to 233 (NAGKSS), 247 to 253 (TDIAGTT), 272 to 275 (DTAG), and 326 to 329 (NKAD) each bind GTP. Ser-232 provides a ligand contact to Mg(2+). Residues Thr-247, Ile-249, and Thr-252 each contribute to the K(+) site. A Mg(2+)-binding site is contributed by Thr-253. Lys-441 provides a ligand contact to (6S)-5-formyl-5,6,7,8-tetrahydrofolate.

Belongs to the TRAFAC class TrmE-Era-EngA-EngB-Septin-like GTPase superfamily. TrmE GTPase family. As to quaternary structure, homodimer. Heterotetramer of two MnmE and two MnmG subunits. It depends on K(+) as a cofactor.

Its subcellular location is the cytoplasm. Functionally, exhibits a very high intrinsic GTPase hydrolysis rate. Involved in the addition of a carboxymethylaminomethyl (cmnm) group at the wobble position (U34) of certain tRNAs, forming tRNA-cmnm(5)s(2)U34. The sequence is that of tRNA modification GTPase MnmE from Hyphomonas neptunium (strain ATCC 15444).